A 92-amino-acid chain; its full sequence is N(2)-fixation sustaining protein CowN (92 aa).

It belongs to the CowN family.

Its function is as follows. Is required to sustain N(2)-dependent growth in the presence of low levels of carbon monoxide (CO). Probably acts by protecting the N(2) fixation ability of the nitrogenase complex, which is inactivated in the presence of CO. In Cereibacter sphaeroides (strain KD131 / KCTC 12085) (Rhodobacter sphaeroides), this protein is N(2)-fixation sustaining protein CowN.